Consider the following 256-residue polypeptide: Ubiquinone/menaquinone biosynthesis C-methyltransferase UbiE (256 aa).

2 residues coordinate S-adenosyl-L-methionine: T78 and D99.

This sequence belongs to the class I-like SAM-binding methyltransferase superfamily. MenG/UbiE family.

The enzyme catalyses a 2-demethylmenaquinol + S-adenosyl-L-methionine = a menaquinol + S-adenosyl-L-homocysteine + H(+). It catalyses the reaction a 2-methoxy-6-(all-trans-polyprenyl)benzene-1,4-diol + S-adenosyl-L-methionine = a 5-methoxy-2-methyl-3-(all-trans-polyprenyl)benzene-1,4-diol + S-adenosyl-L-homocysteine + H(+). It participates in quinol/quinone metabolism; menaquinone biosynthesis; menaquinol from 1,4-dihydroxy-2-naphthoate: step 2/2. It functions in the pathway cofactor biosynthesis; ubiquinone biosynthesis. Its function is as follows. Methyltransferase required for the conversion of demethylmenaquinol (DMKH2) to menaquinol (MKH2) and the conversion of 2-polyprenyl-6-methoxy-1,4-benzoquinol (DDMQH2) to 2-polyprenyl-3-methyl-6-methoxy-1,4-benzoquinol (DMQH2). This is Ubiquinone/menaquinone biosynthesis C-methyltransferase UbiE from Geobacter sulfurreducens (strain ATCC 51573 / DSM 12127 / PCA).